Here is a 335-residue protein sequence, read N- to C-terminus: Methionine import ATP-binding protein MetN 1 (335 aa).

The region spanning 2–242 (IEFQQVHKTY…PQHPTTKRFV (241 aa)) is the ABC transporter domain. Residue 38 to 45 (GHSGAGKS) coordinates ATP.

Belongs to the ABC transporter superfamily. Methionine importer (TC 3.A.1.24) family. In terms of assembly, the complex is composed of two ATP-binding proteins (MetN), two transmembrane proteins (MetI) and a solute-binding protein (MetQ).

The protein resides in the cell inner membrane. It carries out the reaction L-methionine(out) + ATP + H2O = L-methionine(in) + ADP + phosphate + H(+). It catalyses the reaction D-methionine(out) + ATP + H2O = D-methionine(in) + ADP + phosphate + H(+). Functionally, part of the ABC transporter complex MetNIQ involved in methionine import. Responsible for energy coupling to the transport system. The polypeptide is Methionine import ATP-binding protein MetN 1 (Pseudomonas putida (strain ATCC 47054 / DSM 6125 / CFBP 8728 / NCIMB 11950 / KT2440)).